Here is a 486-residue protein sequence, read N- to C-terminus: ATP synthase subunit beta (486 aa).

164-171 (GGAGVGKT) contacts ATP.

It belongs to the ATPase alpha/beta chains family. As to quaternary structure, F-type ATPases have 2 components, CF(1) - the catalytic core - and CF(0) - the membrane proton channel. CF(1) has five subunits: alpha(3), beta(3), gamma(1), delta(1), epsilon(1). CF(0) has four main subunits: a(1), b(1), b'(1) and c(9-12).

The protein resides in the cellular thylakoid membrane. It catalyses the reaction ATP + H2O + 4 H(+)(in) = ADP + phosphate + 5 H(+)(out). Functionally, produces ATP from ADP in the presence of a proton gradient across the membrane. The catalytic sites are hosted primarily by the beta subunits. The chain is ATP synthase subunit beta from Prochlorococcus marinus (strain MIT 9515).